Consider the following 170-residue polypeptide: Cytochrome c-type biogenesis protein CcmE (170 aa).

Residues 1–7 (MTRKQRR) are Cytoplasmic-facing. Residues 8 to 28 (LTIIGGALFVLAVAAGLVLNA) traverse the membrane as a helical; Signal-anchor for type II membrane protein segment. The Periplasmic segment spans residues 29–170 (LRDSIVFFST…GEKTAAGATQ (142 aa)). Residues His122 and Tyr126 each contribute to the heme site. Over residues 137 to 146 (KQGHWKDDYG) the composition is skewed to basic and acidic residues. A disordered region spans residues 137 to 170 (KQGHWKDDYGKPQAAKPGPVSMREGEKTAAGATQ).

The protein belongs to the CcmE/CycJ family.

The protein resides in the cell inner membrane. Its function is as follows. Heme chaperone required for the biogenesis of c-type cytochromes. Transiently binds heme delivered by CcmC and transfers the heme to apo-cytochromes in a process facilitated by CcmF and CcmH. The protein is Cytochrome c-type biogenesis protein CcmE of Bradyrhizobium sp. (strain BTAi1 / ATCC BAA-1182).